Reading from the N-terminus, the 575-residue chain is UvrABC system protein C (575 aa).

A GIY-YIG domain is found at serine 16–valine 94. The UVR domain occupies aspartate 204 to valine 239.

This sequence belongs to the UvrC family. Interacts with UvrB in an incision complex.

It localises to the cytoplasm. Its function is as follows. The UvrABC repair system catalyzes the recognition and processing of DNA lesions. UvrC both incises the 5' and 3' sides of the lesion. The N-terminal half is responsible for the 3' incision and the C-terminal half is responsible for the 5' incision. This chain is UvrABC system protein C, found in Shigella dysenteriae serotype 1 (strain Sd197).